Reading from the N-terminus, the 672-residue chain is Single-strand DNA endonuclease ASTE1 (672 aa).

The tract at residues 349–398 is interaction with SHLD2; sequence TFLHTQVENMQRPNAHRISQPIRQIIYGLLLNGPSHAEDIAQNTLPSQLL.

This sequence belongs to the asteroid family. In terms of assembly, interacts with SHLD1, SHLD2, SHLD3, RIF1 and MAD2L2/REV7.

In terms of biological role, structure-specific DNA endonuclease that specifically cleaves single-stranded DNA and 3' overhang DNA. Contributes to the control of DNA double-strand break repair choice by antagonizing BRCA1-dependent homologous recombination (HR) and promoting non-homologous end-joining (NHEJ). Recruited to the single-stranded DNA ends by SHLD2 and cleaves the 3' exposed DNA ends, therefore inhibiting DNA end resection (necessary for HR) and promoting DNA end protection (necessary for NHEJ). The sequence is that of Single-strand DNA endonuclease ASTE1 (Aste1) from Mus musculus (Mouse).